Reading from the N-terminus, the 184-residue chain is Regulatory protein RecX (184 aa).

A disordered region spans residues 1–21 (MTLFPLPSTSDPAEADESTKR).

The protein belongs to the RecX family.

The protein resides in the cytoplasm. In terms of biological role, modulates RecA activity. The protein is Regulatory protein RecX of Mycolicibacterium vanbaalenii (strain DSM 7251 / JCM 13017 / BCRC 16820 / KCTC 9966 / NRRL B-24157 / PYR-1) (Mycobacterium vanbaalenii).